Here is a 384-residue protein sequence, read N- to C-terminus: S-adenosylmethionine synthase (384 aa).

H15 is a binding site for ATP. Mg(2+) is bound at residue D17. A K(+)-binding site is contributed by E43. E56 and Q99 together coordinate L-methionine. The flexible loop stretch occupies residues 99–109 (QSADINQGVDR). ATP-binding positions include 164-166 (DAK), 230-231 (RF), D239, 245-246 (RK), A262, and K266. Residue D239 coordinates L-methionine. L-methionine is bound at residue K270.

It belongs to the AdoMet synthase family. Homotetramer; dimer of dimers. Mg(2+) serves as cofactor. It depends on K(+) as a cofactor.

It is found in the cytoplasm. The enzyme catalyses L-methionine + ATP + H2O = S-adenosyl-L-methionine + phosphate + diphosphate. It functions in the pathway amino-acid biosynthesis; S-adenosyl-L-methionine biosynthesis; S-adenosyl-L-methionine from L-methionine: step 1/1. Its function is as follows. Catalyzes the formation of S-adenosylmethionine (AdoMet) from methionine and ATP. The overall synthetic reaction is composed of two sequential steps, AdoMet formation and the subsequent tripolyphosphate hydrolysis which occurs prior to release of AdoMet from the enzyme. The protein is S-adenosylmethionine synthase of Haemophilus influenzae (strain PittGG).